The sequence spans 95 residues: Small ribosomal subunit protein bS20c (95 aa).

The protein belongs to the bacterial ribosomal protein bS20 family.

The protein resides in the plastid. It is found in the cyanelle. Binds directly to 16S ribosomal RNA. The sequence is that of Small ribosomal subunit protein bS20c (rps20) from Cyanophora paradoxa.